A 307-amino-acid polypeptide reads, in one-letter code: MQEAYVNINSIPTHIFTWGRWIEETITEKEIVICITGNPGLPGFYTEFAGTLQKELGDLPVWVIGHAGHDDPPEASIREVPQLSGNEELFNLDGQIRHKIAFIEKYVPSDVKIHLIGHSIGAWMILQLLENERIRSRIQKCYMLFPTVERMMESPNGWVFTKVAMPLYSVFGYIFFSFFNFLPVWLRLMLIQIYFLIFSIPRQFLGTALKYSKPSVAEKVVFLADDEMARVRGIQREIVEQNLDLLKFYYGTTDGWVPISYYDQLKKDYPKVDAQLDTKKIDHAFVLRHSQPMAVIVRDMIQQHRRV.

Catalysis depends on serine 119, which acts as the Nucleophile. Residues 157-200 (GWVFTKVAMPLYSVFGYIFFSFFNFLPVWLRLMLIQIYFLIFSI) are potential amphipathic helix required for binding to lipid droplets. Transmembrane regions (helical) follow at residues 166–186 (PLYS…PVWL) and 188–208 (LMLI…LGTA). Active-site charge relay system residues include aspartate 254 and histidine 283.

Belongs to the AB hydrolase superfamily. LDAH family. In terms of assembly, interacts with the juvenile hormone hydrolase enzymes Jheh1 and Jheh2. Also interacts with Hmu, Cpr, Gp93 and Pvr. In terms of tissue distribution, expressed in accessory glands.

The protein resides in the lipid droplet. Its subcellular location is the endoplasmic reticulum membrane. It catalyses the reaction a cholesterol ester + H2O = cholesterol + a fatty acid + H(+). Functionally, probable serine lipid hydrolase associated with lipid droplets. Appears to lack or have very low cholesterol esterase activity. Appears to lack triglyceride lipase activity. Involved in cholesterol and triglyceride homeostasis; stimulates cellular triglyceride accumulation and cellular cholesterol release. Involved in negatively regulating juvenile hormone (JH) and possibly, insulin signaling activities such as triacylglycerols (TAG) storage, and thereby plays a role in the endocrine regulation of organismal growth and survival. Likely functions by enhancing the activity of the JH hydrolase enzymes Jheh1 and Jheh2. Required for lipid droplet positioning and fat storage. The sequence is that of Lipid droplet-associated hydrolase from Drosophila melanogaster (Fruit fly).